The following is a 179-amino-acid chain: MNTNVFRLLLLGSLFSLSACVQQSEVRQMKHSVSTLNQEMTQLNQETVKITQQNRLNAKSSSGVYLLPGAKTPARLESQIGTLRMSLVNITPDADGTTLTLRIQGESNDPLPAFSGTVEYGQIQGTIDNFQEINVQNQLINAPASVLAPSDVDIPLQLKGISVDQLGFVRIHDIQPVMQ.

Residues 1–19 (MNTNVFRLLLLGSLFSLSA) form the signal peptide. A lipid anchor (N-palmitoyl cysteine) is attached at C20. Residue C20 is the site of S-diacylglycerol cysteine attachment.

The protein resides in the cell membrane. This is an uncharacterized protein from Escherichia coli (strain K12).